Reading from the N-terminus, the 154-residue chain is Toxin YhaV (154 aa).

In terms of assembly, homohexamer; forms a complex with PrlF (SohA) with stoichiometry PrlF(2)-YhaV(4), possibly as a YhaV(2)-PrlF(2)-YhaV(2) complex like the MazFE complex. May dimerize in solution.

In terms of biological role, toxic component of a type II toxin-antitoxin (TA) system. Has RNase activity in vitro. Acts as a transcription factor. The YhaV/PrlF complex binds the prlF-yhaV operon, probably negatively regulating its expression. This chain is Toxin YhaV (yhaV), found in Escherichia coli O6:H1 (strain CFT073 / ATCC 700928 / UPEC).